The chain runs to 511 residues: Cytochrome P450 monooxygenase nodR (511 aa).

Residues 8 to 28 (ILFPISWEQSPIFLAVGLIFA) form a helical membrane-spanning segment. N-linked (GlcNAc...) asparagine glycans are attached at residues Asn-76 and Asn-373. Cys-452 contributes to the heme binding site.

This sequence belongs to the cytochrome P450 family. Heme serves as cofactor.

It is found in the membrane. It participates in secondary metabolite biosynthesis. In terms of biological role, cytochrome P450 monooxygenase; part of the gene cluster that mediates the biosynthesis of the indole diterpenes nodulisporic acids (NA). Nodulisporic acid A (NAA) and its chemically modified derivatives are of particular significance because of their highly potent insecticidal activity against blood-feeding arthropods and lack of observable adverse effects on mammals, in particular the tremogenicity associated with the paspaline-derived IDTs is not observed. The geranylgeranyl diphosphate (GGPP) synthase ggs1, localized outside of the cluster, is proposed to catalyze the first step in nodulisporic acid biosynthesis via conversion of farnesyl pyrophosphate and isopentyl pyrophosphate into geranylgeranyl pyrophosphate (GGPP). Condensation of indole-3-glycerol phosphate with GGPP by the prenyl transferase nodC then forms 3-geranylgeranylindole (3-GGI). Epoxidation by the FAD-dependent monooxygenase nodM leads to a single-epoxidized-GGI that is substrate of the terpene cyclase nodB for cyclization to yield emindole SB. The terminal methyl carbon, C28, of emindole SB is then oxidized by the cytochrome P450 monooxygenase nodW to produce nodulisporic acid F (NAF), the pentacyclic core of NAA. NAF is converted to nodulisporic acid E (NAE) via prenylation. This step is probably performed by one of the indole diterpene prenyltransferases nodD1 or nodD2. Several oxidation steps performed by the FAD-linked oxidoreductase nodO and one of the cytochrome P450 monooxygenase nodR, nodX or nodZ further convert NAE to nodulisporic acid D (NAD). NAD is substrate of cytochrome P450 monooxygenase nodJ to produce the precursor of nodulisporic acid C (NAC), converted to NAC by one of the indole diterpene prenyltransferases nodD1 or nodD2. The FAD-dependent monooxygenase nodY2 then oxidizes NAC to nodulisporic acid B (NAB). Finally NAB is converted to NAA by one of the cytochrome P450 monooxygenases nodR, nodX or nodZ. The sequence is that of Cytochrome P450 monooxygenase nodR from Hypoxylon pulicicidum.